A 281-amino-acid chain; its full sequence is Alcohol dehydrogenase-related 31 kDa protein (281 aa).

Tyr-11 to Leu-34 is an NAD(+) binding site. Ser-139 provides a ligand contact to substrate. Tyr-152 functions as the Proton acceptor in the catalytic mechanism.

It belongs to the short-chain dehydrogenases/reductases (SDR) family.

The protein is Alcohol dehydrogenase-related 31 kDa protein (Adhr) of Drosophila ambigua (Fruit fly).